The following is an 88-amino-acid chain: Small ribosomal subunit protein bS20 (88 aa).

This sequence belongs to the bacterial ribosomal protein bS20 family.

Its function is as follows. Binds directly to 16S ribosomal RNA. This chain is Small ribosomal subunit protein bS20, found in Bartonella quintana (strain Toulouse) (Rochalimaea quintana).